Reading from the N-terminus, the 318-residue chain is Protoheme IX farnesyltransferase (318 aa).

9 helical membrane-spanning segments follow: residues 33 to 53, 54 to 74, 102 to 122, 125 to 145, 154 to 174, 181 to 201, 225 to 245, 246 to 266, and 288 to 308; these read VMSLVVFTALVGLVAAPVSVH, PFIGFCAILFIAIGGGASGAL, GEALALGLGLSGLSVMMLALA, VLAGAFLAFTIFFYVVVYTMW, IVIGGAAGAFPPVIGWIAATG, WLMFALTFMWTPPHFWALALF, VHILIYTILLALLALGTAFSN, IGGPIYLAVALVLNALFLLGA, and FFKLSLLYLFLHFGAILAEAL.

It belongs to the UbiA prenyltransferase family. Protoheme IX farnesyltransferase subfamily. As to quaternary structure, interacts with CtaA.

The protein resides in the cell inner membrane. It carries out the reaction heme b + (2E,6E)-farnesyl diphosphate + H2O = Fe(II)-heme o + diphosphate. Its pathway is porphyrin-containing compound metabolism; heme O biosynthesis; heme O from protoheme: step 1/1. Its function is as follows. Converts heme B (protoheme IX) to heme O by substitution of the vinyl group on carbon 2 of heme B porphyrin ring with a hydroxyethyl farnesyl side group. The sequence is that of Protoheme IX farnesyltransferase from Ruegeria pomeroyi (strain ATCC 700808 / DSM 15171 / DSS-3) (Silicibacter pomeroyi).